The primary structure comprises 232 residues: Endonuclease V (232 aa).

The Mg(2+) site is built by D43 and D109.

It belongs to the endonuclease V family. Requires Mg(2+) as cofactor.

It is found in the cytoplasm. It carries out the reaction Endonucleolytic cleavage at apurinic or apyrimidinic sites to products with a 5'-phosphate.. Its function is as follows. DNA repair enzyme involved in the repair of deaminated bases. Selectively cleaves double-stranded DNA at the second phosphodiester bond 3' to a deoxyinosine leaving behind the intact lesion on the nicked DNA. The sequence is that of Endonuclease V from Thermofilum pendens (strain DSM 2475 / Hrk 5).